A 420-amino-acid chain; its full sequence is Cell division protein FtsA (420 aa).

This sequence belongs to the FtsA/MreB family. In terms of assembly, self-interacts. Interacts with FtsZ.

It is found in the cell inner membrane. Its function is as follows. Cell division protein that is involved in the assembly of the Z ring. May serve as a membrane anchor for the Z ring. The protein is Cell division protein FtsA of Escherichia coli O157:H7.